We begin with the raw amino-acid sequence, 361 residues long: Single-stranded DNA-binding protein 3 (361 aa).

Met1 bears the N-acetylmethionine mark. The LisH domain occupies 16–48; the sequence is AREKLALYVYEYLLHVGAQKSAQTFLSEIRWEK. 3 positions are modified to asymmetric dimethylarginine: Arg128, Arg134, and Arg138. Disordered stretches follow at residues 140 to 166 and 184 to 361; these read GNQPPGGVPGTQPLMPNSMDPTRQQGH and PMGP…TMSV. Low complexity predominate over residues 223–241; the sequence is PNSANSIPYSSSSPGTYVG. Residues 245 to 255 show a composition bias toward pro residues; the sequence is GGGPPGTPIMP. Residues 258 to 269 show a composition bias toward polar residues; the sequence is ADSTNSSDNIYT. A compositionally biased stretch (gly residues) spans 288-298; it reads GSDGPMGGMGG. Over residues 319 to 330 the composition is skewed to low complexity; that stretch reads NSPNNISGISNP. Phosphoserine is present on residues Ser320, Ser325, and Ser328. At Thr333 the chain carries Phosphothreonine. A compositionally biased stretch (polar residues) spans 346-361; the sequence is HSFQNDNYSPSMTMSV. Residues Ser354 and Ser360 each carry the phosphoserine modification.

It localises to the nucleus. Its function is as follows. May be involved in transcription regulation of the alpha 2(I) collagen gene where it binds to the single-stranded polypyrimidine sequences in the promoter region. The sequence is that of Single-stranded DNA-binding protein 3 (Ssbp3) from Rattus norvegicus (Rat).